The chain runs to 60 residues: Cytochrome c oxidase subunit 9, mitochondrial (60 aa).

Topologically, residues 1–18 (MSAIAPITGSLKKRIMKD) are mitochondrial matrix. The chain crosses the membrane as a helical span at residues 19–37 (IAVGMGLGTVLGSYWWWGF). Residues 38–57 (HKPKIAARENYYTQLAEQKA) are Mitochondrial intermembrane-facing. The propeptide at 58–60 (AEE) is removed in mature form.

Belongs to the fungal cytochrome c oxidase subunit 7a family. As to quaternary structure, component of the cytochrome c oxidase (complex IV, CIV), a multisubunit enzyme composed of a catalytic core of 3 subunits and several supernumerary subunits. The complex exists as a monomer or a dimer and forms supercomplexes (SCs) in the inner mitochondrial membrane with ubiquinol-cytochrome c oxidoreductase (cytochrome b-c1 complex, complex III, CIII).

It localises to the mitochondrion inner membrane. Its pathway is energy metabolism; oxidative phosphorylation. Its function is as follows. Component of the cytochrome c oxidase, the last enzyme in the mitochondrial electron transport chain which drives oxidative phosphorylation. The respiratory chain contains 3 multisubunit complexes succinate dehydrogenase (complex II, CII), ubiquinol-cytochrome c oxidoreductase (cytochrome b-c1 complex, complex III, CIII) and cytochrome c oxidase (complex IV, CIV), that cooperate to transfer electrons derived from NADH and succinate to molecular oxygen, creating an electrochemical gradient over the inner membrane that drives transmembrane transport and the ATP synthase. Cytochrome c oxidase is the component of the respiratory chain that catalyzes the reduction of oxygen to water. Electrons originating from reduced cytochrome c in the intermembrane space (IMS) are transferred via the dinuclear copper A center (CU(A)) of subunit 2 and heme A of subunit 1 to the active site in subunit 1, a binuclear center (BNC) formed by heme A3 and copper B (CU(B)). The BNC reduces molecular oxygen to 2 water molecules using 4 electrons from cytochrome c in the IMS and 4 protons from the mitochondrial matrix. The sequence is that of Cytochrome c oxidase subunit 9, mitochondrial (COX9) from Eremothecium gossypii (strain ATCC 10895 / CBS 109.51 / FGSC 9923 / NRRL Y-1056) (Yeast).